A 138-amino-acid polypeptide reads, in one-letter code: CLAVATA3/ESR (CLE)-related protein 2 (138 aa).

The signal sequence occupies residues 1 to 22 (MPNIFKILLIVLLAVVSFRLSA). A required for secretion from the host cytoplasm to the host apoplasm region spans residues 23-90 (STGDKKTAND…VPSHVTNRSM (68 aa)). 3 N-linked (GlcNAc...) asparagine glycosylation sites follow: Asn37, Asn87, and Asn123. Disordered stretches follow at residues 66-97 (AIGR…PPPV) and 116-138 (LAEK…PHHH). Positions 127–138 (RLSPSGPDPHHH) match the CLE motif.

Belongs to the CLV3/ESR signal peptide family. As to expression, highly expressed exclusively within the dorsal esophageal gland cell during syncytium formation in host plants (at protein level).

It localises to the secreted. It is found in the host cytoplasm. The protein resides in the host extracellular space. The protein localises to the extracellular space. Its subcellular location is the apoplast. In terms of biological role, mimics host plant CLE extracellular signal peptides that regulate cell fate. May play a role in the differentiation or division of feeding cells (syncytia) induced in plant roots during infection. The polypeptide is CLAVATA3/ESR (CLE)-related protein 2 (CLE2) (Heterodera glycines (Soybean cyst nematode worm)).